The sequence spans 556 residues: Man(5)GlcNAc(2)-PP-dolichol translocation protein RFT1 (556 aa).

12 helical membrane-spanning segments follow: residues 10 to 30 (LLGA…TFGI), 41 to 61 (EVLG…LFLS), 91 to 111 (LTVP…LNWL), 129 to 149 (VAFS…AQVF), 156 to 176 (ILLN…IVTG), 184 to 204 (AFAI…YGFF), 353 to 373 (SVLN…FTFG), 389 to 409 (FVAG…IYLL), 440 to 460 (VSFL…GFIF), 461 to 477 (ANCI…TYYI), 489 to 509 (LLGL…GIVC), and 517 to 537 (LATH…SWAL).

It belongs to the RFT1 family.

It localises to the endoplasmic reticulum membrane. The protein operates within protein modification; protein glycosylation. Its function is as follows. Intramembrane glycolipid transporter that operates in the biosynthetic pathway of dolichol-linked oligosaccharides, the glycan precursors employed in protein asparagine (N)-glycosylation. The sequential addition of sugars to dolichol pyrophosphate produces dolichol-linked oligosaccharides containing fourteen sugars, including two GlcNAcs, nine mannoses and three glucoses. Once assembled, the oligosaccharide is transferred from the lipid to nascent proteins by oligosaccharyltransferases. The assembly of dolichol-linked oligosaccharides begins on the cytosolic side of the endoplasmic reticulum membrane and finishes in its lumen. RFT1 could mediate the translocation of the cytosolically oriented intermediate DolPP-GlcNAc2Man5, produced by ALG11, into the ER lumen where dolichol-linked oligosaccharides assembly continues. However, the intramembrane lipid transporter activity could not be confirmed in vitro. In Drosophila melanogaster (Fruit fly), this protein is Man(5)GlcNAc(2)-PP-dolichol translocation protein RFT1.